The chain runs to 201 residues: MDPAASPAAAPPAAPAAAPAADPAADPAAALPGQALAQAPALAQINGQEGARNERAAYLWRPWLSSINDQPRQARSLVDWADNRATAAEAAKTDSDFHHPVRLYWPKSHSFDYLYSAGEILLNNFPVQATINLYEDSDSADNEEDKEEEEEEEEEEDDEEEEEDEDKDVNENEPEVCMGVSEATTHKATAHSPDPHSACPN.

The segment at 1–29 (MDPAASPAAAPPAAPAAAPAADPAADPAA) is disordered. The segment covering 15-29 (PAAAPAADPAADPAA) has biased composition (low complexity). Positions 57–60 (AYLW) match the WRPW motif motif. The tract at residues 99-134 (HPVRLYWPKSHSFDYLYSAGEILLNNFPVQATINLY) is ripply homology domain. Positions 136-174 (DSDSADNEEDKEEEEEEEEEEDDEEEEEDEDKDVNENEP) are enriched in acidic residues. The tract at residues 136 to 201 (DSDSADNEED…SPDPHSACPN (66 aa)) is disordered.

The protein belongs to the ripply family. In terms of tissue distribution, expressed in the anterior presomitic mesoderm and somites of stage E9.5 dpc embryos. Also expressed in tongue, diaphragm and intercostal muscles at 16.5 dpc.

It is found in the nucleus. Functionally, plays a role in somitogenesis. Essential for transcriptional repression of the segmental patterning genes, thus terminating the segmentation program in the presomitic mesoderm, and also required for the maintenance of rostrocaudal polarity in somites. The polypeptide is Protein ripply1 (Mus musculus (Mouse)).